The following is a 227-amino-acid chain: Class I hydrophobin 4 (227 aa).

An N-terminal signal peptide occupies residues 1–18 (MQFTTFALLAVAAATASA). Disulfide bonds link cysteine 159-cysteine 207, cysteine 167-cysteine 200, cysteine 168-cysteine 186, and cysteine 208-cysteine 222. N-linked (GlcNAc...) asparagine glycosylation is found at asparagine 190 and asparagine 219.

Belongs to the fungal hydrophobin family. Self-assembles to form functional amyloid fibrils called rodlets. Self-assembly into fibrillar rodlets occurs spontaneously at hydrophobic:hydrophilic interfaces and the rodlets further associate laterally to form amphipathic monolayers. As to expression, expressed in conidia and aerial hyphae.

It is found in the secreted. The protein localises to the cell wall. Functionally, aerial growth, conidiation, and dispersal of filamentous fungi in the environment rely upon a capability of their secreting small amphipathic proteins called hydrophobins (HPBs) with low sequence identity. Class I can self-assemble into an outermost layer of rodlet bundles on aerial cell surfaces, conferring cellular hydrophobicity that supports fungal growth, development and dispersal; whereas Class II form highly ordered films at water-air interfaces through intermolecular interactions but contribute nothing to the rodlet structure. Hcf-4 is a class I hydrophobin that is involved in the development and germination of conidia. This is Class I hydrophobin 4 from Passalora fulva (Tomato leaf mold).